The primary structure comprises 354 residues: tRNA N6-adenosine threonylcarbamoyltransferase (354 aa).

Residues His-116 and His-120 each contribute to the Fe cation site. Substrate is bound by residues 139–143 (LVSGG), Asp-172, Gly-185, and Asn-281. A Fe cation-binding site is contributed by Asp-309.

This sequence belongs to the KAE1 / TsaD family. It depends on Fe(2+) as a cofactor.

It is found in the cytoplasm. The catalysed reaction is L-threonylcarbamoyladenylate + adenosine(37) in tRNA = N(6)-L-threonylcarbamoyladenosine(37) in tRNA + AMP + H(+). Its function is as follows. Required for the formation of a threonylcarbamoyl group on adenosine at position 37 (t(6)A37) in tRNAs that read codons beginning with adenine. Is involved in the transfer of the threonylcarbamoyl moiety of threonylcarbamoyl-AMP (TC-AMP) to the N6 group of A37, together with TsaE and TsaB. TsaD likely plays a direct catalytic role in this reaction. This Parasynechococcus marenigrum (strain WH8102) protein is tRNA N6-adenosine threonylcarbamoyltransferase.